The sequence spans 274 residues: Glycerol uptake facilitator protein (274 aa).

Transmembrane regions (helical) follow at residues 3-23 (AFWGEVIGTMLLIIFGAGVCA) and 38-58 (IVVVFGWGLGVAMAAYAVGGI). The NPA 1 motif lies at 64–66 (NPA). A run of 3 helical transmembrane segments spans residues 82–102 (VPVYIAAQMIGAIIGAVIIYL), 131–151 (FANVLSEVIGTFVLVLGILAI), and 164–184 (IVGFLIVAIGISLGGTTGYAI). The NPA 2 motif lies at 185–187 (NPA). A helical membrane pass occupies residues 238 to 258 (ITSSFWIVSVILVVVLLGLYV).

The protein belongs to the MIP/aquaporin (TC 1.A.8) family.

It is found in the cell membrane. The catalysed reaction is glycerol(in) = glycerol(out). In terms of biological role, mediates glycerol diffusion across the cytoplasmic membrane via a pore-type mechanism. In Bacillus subtilis (strain 168), this protein is Glycerol uptake facilitator protein (glpF).